The chain runs to 424 residues: Chloroquine resistance transporter (424 aa).

Over residues 1–10 the composition is skewed to basic residues; it reads MTILKKKKKG. Residues 1–32 form a disordered region; the sequence is MTILKKKKKGSPQITPDERYRELDSHAQNESE. Over 1–57 the chain is Cytoplasmic; sequence MTILKKKKKGSPQITPDERYRELDSHAQNESEIQEDVPISRKIANFLKLAYNEIREN. Over residues 16-29 the composition is skewed to basic and acidic residues; it reads PDERYRELDSHAQN. A helical membrane pass occupies residues 58-78; sequence ISIYLLIIVYLCVCVMNKLLA. At 79–89 the chain is on the vacuolar side; the sequence is KRTLKKIGNYS. N87 is a glycosylation site (N-linked (GlcNAc...) asparagine). Residues 90–110 traverse the membrane as a helical segment; the sequence is FVTSETHNCICMVVFFALYFM. Topologically, residues 111–124 are cytoplasmic; the sequence is FGRRVMSAKERHRN. Residues 125–145 traverse the membrane as a helical segment; the sequence is FGVQFLLISLLDACSVIIAFI. Residues 146–153 are Vacuolar-facing; sequence GLTRTTGN. The chain crosses the membrane as a helical span at residues 154–174; it reads IQSFVMQLSIPINMFFCFLIL. Over 175–179 the chain is Cytoplasmic; the sequence is RYRYH. The helical transmembrane segment at 180-200 threads the bilayer; it reads LFNYVGAFIIVVTIAVVEFML. At 201 to 208 the chain is on the vacuolar side; the sequence is SFETQEEN. The helical transmembrane segment at 209–229 threads the bilayer; that stretch reads SIVFNLVLIASLIPLSFSNMT. Residues 230–246 lie on the Cytoplasmic side of the membrane; it reads REIVFKKYKINILRLNA. The chain crosses the membrane as a helical span at residues 247-267; that stretch reads VVSFFQIFTSCLMLPMYTLPF. Topologically, residues 268–316 are vacuolar; that stretch reads LKQINLPFSEIGTNIKNGFRCLFLGQNTIVENCGLGMSKMCDDCEGAWK. 2 cysteine pairs are disulfide-bonded: C288–C311 and C300–C308. Residues 317-337 form a helical membrane-spanning segment; that stretch reads TFIAYSFFNICDNLITSFIIE. The Cytoplasmic segment spans residues 338-345; it reads KFSTMTYT. Residues 346–366 form a helical membrane-spanning segment; sequence IVSCIQGPAIAIAYYFKFLAG. The Vacuolar portion of the chain corresponds to 367–376; the sequence is DAVMQPRMLD. The chain crosses the membrane as a helical span at residues 377 to 397; sequence FVTLFGYLFGSIIYRIGNIIL. The Cytoplasmic portion of the chain corresponds to 398-424; that stretch reads EKKRMMEAGNDDDSEGELTNADSIITH.

It belongs to the CRT-like transporter family.

Its subcellular location is the vacuole membrane. Nutrient transporter. Involved in maintaining the osmotic homeostasis of the digestive vacuole. This chain is Chloroquine resistance transporter, found in Plasmodium vivax (strain Salvador I).